Reading from the N-terminus, the 258-residue chain is UPF0246 protein Pnec_1068 (258 aa).

Belongs to the UPF0246 family.

In Polynucleobacter necessarius subsp. necessarius (strain STIR1), this protein is UPF0246 protein Pnec_1068.